The sequence spans 376 residues: ATP phosphoribosyltransferase regulatory subunit (376 aa).

It belongs to the class-II aminoacyl-tRNA synthetase family. HisZ subfamily. In terms of assembly, heteromultimer composed of HisG and HisZ subunits.

It localises to the cytoplasm. It functions in the pathway amino-acid biosynthesis; L-histidine biosynthesis; L-histidine from 5-phospho-alpha-D-ribose 1-diphosphate: step 1/9. Functionally, required for the first step of histidine biosynthesis. May allow the feedback regulation of ATP phosphoribosyltransferase activity by histidine. The polypeptide is ATP phosphoribosyltransferase regulatory subunit (Brucella ovis (strain ATCC 25840 / 63/290 / NCTC 10512)).